We begin with the raw amino-acid sequence, 450 residues long: ATP-dependent protease ATPase subunit HslU (450 aa).

Residues Ile-18 and 60 to 65 (GVGKTE) each bind ATP. Residues 140 to 151 (KTSSSGWAQQQE) are compositionally biased toward polar residues. A disordered region spans residues 140–162 (KTSSSGWAQQQEETPENDDQRGT). Asp-263, Glu-328, and Arg-400 together coordinate ATP.

It belongs to the ClpX chaperone family. HslU subfamily. In terms of assembly, a double ring-shaped homohexamer of HslV is capped on each side by a ring-shaped HslU homohexamer. The assembly of the HslU/HslV complex is dependent on binding of ATP.

It is found in the cytoplasm. ATPase subunit of a proteasome-like degradation complex; this subunit has chaperone activity. The binding of ATP and its subsequent hydrolysis by HslU are essential for unfolding of protein substrates subsequently hydrolyzed by HslV. HslU recognizes the N-terminal part of its protein substrates and unfolds these before they are guided to HslV for hydrolysis. The chain is ATP-dependent protease ATPase subunit HslU from Idiomarina loihiensis (strain ATCC BAA-735 / DSM 15497 / L2-TR).